The sequence spans 153 residues: Guanyl-specific ribonuclease N1 (153 aa).

The N-terminal stretch at Met-1–Ala-20 is a signal peptide. Positions Ala-21–Gln-49 are excised as a propeptide. Cystine bridges form between Cys-51/Cys-59 and Cys-55/Cys-152. The active site involves His-89. Catalysis depends on Glu-107, which acts as the Proton acceptor. His-141 acts as the Proton donor in catalysis.

This sequence belongs to the ribonuclease N1/T1 family.

It catalyses the reaction [RNA] containing guanosine + H2O = an [RNA fragment]-3'-guanosine-3'-phosphate + a 5'-hydroxy-ribonucleotide-3'-[RNA fragment].. The chain is Guanyl-specific ribonuclease N1 (grn) from Neurospora crassa (strain ATCC 24698 / 74-OR23-1A / CBS 708.71 / DSM 1257 / FGSC 987).